A 156-amino-acid polypeptide reads, in one-letter code: MESKENNILRLNRVADSFVQFFNNREFNNLELISQIFNNPESDQWWMSGDENMYPFSGWKPIQKRLNDMIPLIHGYDQFSFTESNKTFNIEKNLIIMEARTSAVGYGDNIYINEYAFFLTVNNDGKICLIKEYFDPSEILKYSLSNKKLTELYHKV.

It belongs to the UPF0523 family.

This chain is UPF0523 protein C, found in Dictyostelium discoideum (Social amoeba).